We begin with the raw amino-acid sequence, 95 residues long: Aspartyl/glutamyl-tRNA(Asn/Gln) amidotransferase subunit C (95 aa).

The protein belongs to the GatC family. In terms of assembly, heterotrimer of A, B and C subunits.

It catalyses the reaction L-glutamyl-tRNA(Gln) + L-glutamine + ATP + H2O = L-glutaminyl-tRNA(Gln) + L-glutamate + ADP + phosphate + H(+). It carries out the reaction L-aspartyl-tRNA(Asn) + L-glutamine + ATP + H2O = L-asparaginyl-tRNA(Asn) + L-glutamate + ADP + phosphate + 2 H(+). Allows the formation of correctly charged Asn-tRNA(Asn) or Gln-tRNA(Gln) through the transamidation of misacylated Asp-tRNA(Asn) or Glu-tRNA(Gln) in organisms which lack either or both of asparaginyl-tRNA or glutaminyl-tRNA synthetases. The reaction takes place in the presence of glutamine and ATP through an activated phospho-Asp-tRNA(Asn) or phospho-Glu-tRNA(Gln). This is Aspartyl/glutamyl-tRNA(Asn/Gln) amidotransferase subunit C from Geotalea daltonii (strain DSM 22248 / JCM 15807 / FRC-32) (Geobacter daltonii).